Reading from the N-terminus, the 279-residue chain is Protoheme IX farnesyltransferase (279 aa).

9 helical membrane passes run 1 to 21 (MIKPGIILGNIICLSGGFFLA), 29 to 49 (IFFLKTVFGLILIISSSCILN), 79 to 99 (ILFFFSIILLILGLLVFYIYI), 101 to 121 (FLCTIISFFGFFFYVYLYSYL), 128 to 148 (FSTFVGSVSGSLPPIIGYVAV), 156 to 176 (CTILFFMFSFWQIAHSYSIII), 200 to 220 (IIFISICILNLFFFNFLLYFF), 225 to 245 (FFYFLYTSFFIFLWFIFSFLS), and 254 to 274 (IWSRIMFFFSIFIIFMISFLM).

It belongs to the UbiA prenyltransferase family. Protoheme IX farnesyltransferase subfamily.

Its subcellular location is the cell membrane. It carries out the reaction heme b + (2E,6E)-farnesyl diphosphate + H2O = Fe(II)-heme o + diphosphate. Its pathway is porphyrin-containing compound metabolism; heme O biosynthesis; heme O from protoheme: step 1/1. Converts heme B (protoheme IX) to heme O by substitution of the vinyl group on carbon 2 of heme B porphyrin ring with a hydroxyethyl farnesyl side group. The chain is Protoheme IX farnesyltransferase from Buchnera aphidicola subsp. Cinara cedri (strain Cc).